Reading from the N-terminus, the 155-residue chain is Prespore-specific protein E (155 aa).

Positions 1–20 (MRFISIFLIIVALCVSSSWA) are cleaved as a signal peptide. N-linked (GlcNAc...) asparagine glycosylation is found at asparagine 22, asparagine 82, asparagine 85, and asparagine 102. Serine 105 carries O-linked (GlcNAc) serine glycosylation. Asparagine 133 is lipidated: GPI-like-anchor amidated asparagine. A propeptide spans 134-155 (SADKVAVGIAIIFGALISLLAL) (removed in mature form).

Post-translationally, the GPI-like-anchor contains a phosphoceramide group, rather than a phosphatidyl group.

It is found in the cell membrane. This Dictyostelium discoideum (Social amoeba) protein is Prespore-specific protein E (pspE).